A 423-amino-acid chain; its full sequence is uncharacterized protein (423 aa).

Positions 75 to 145 constitute a BON domain; the sequence is LHVVVTQPIA…PIVNNIKVAG (71 aa).

The protein belongs to the bacterial secretin family.

In terms of biological role, involved in the secretion of an unknown compound. This is an uncharacterized protein from Sinorhizobium fredii (strain NBRC 101917 / NGR234).